A 534-amino-acid chain; its full sequence is Flavonoid-6-hydroxylase (534 aa).

The helical transmembrane segment at 3–23 threads the bilayer; that stretch reads FISFVYTLIAFSSLLYFYLIW. C467 provides a ligand contact to heme.

It belongs to the cytochrome P450 family. The cofactor is heme. In terms of tissue distribution, expressed in leaves.

It is found in the membrane. The catalysed reaction is genkwanin + reduced [NADPH--hemoprotein reductase] + O2 = scutellarein 7-methyl ether + oxidized [NADPH--hemoprotein reductase] + H2O. The enzyme catalyses (2S)-sakuranetin + reduced [NADPH--hemoprotein reductase] + O2 = (2S)-7-methylcarthamidin + oxidized [NADPH--hemoprotein reductase] + H2O + H(+). It carries out the reaction apigenin 4',7-dimethyl ether + reduced [NADPH--hemoprotein reductase] + O2 = ladanein + oxidized [NADPH--hemoprotein reductase] + H2O + H(+). It catalyses the reaction (2S)-naringenin 4',7-dimethyl ether + reduced [NADPH--hemoprotein reductase] + O2 = (2S)-carthamidin-4',7-dimethyl ether + oxidized [NADPH--hemoprotein reductase] + H2O + H(+). It functions in the pathway flavonoid metabolism. Hydroxylase involved in the biosynthesis of polymethoxylated flavonoids natural products such as nevadensin and salvigenin, aroma compounds which contribute to the flavor of sweet basil, and exhibit pharmacological activities such as anti-allergic, anti-oxidant, antibacterial, anti-proliferative, and anti-inflammatory effects. Catalyzes the 6-hydroxylation of 7-O-methylated precursors such as the conversion of genkwanin (GENK) to scutellarein-7-methyl ether (SCU7Me). Can also use, with a lower efficiency, apigenin-7,4'-dimethyl ether (AdM), naringenin-7-methyl ether (SAK) and naringenin-7,4'-dimethyl ether (NdM) as substrates. The chain is Flavonoid-6-hydroxylase from Ocimum basilicum (Sweet basil).